The chain runs to 191 residues: Protein Ves (191 aa).

The protein belongs to the Ves family.

This is Protein Ves from Escherichia coli O7:K1 (strain IAI39 / ExPEC).